We begin with the raw amino-acid sequence, 132 residues long: Telomere bouquet protein 1 (132 aa).

As to quaternary structure, interacts with bqt2 and sad1. The bqt1-bqt2-sad1 complex binds rap1.

The protein localises to the cytoplasm. The protein resides in the cytoskeleton. Its subcellular location is the microtubule organizing center. It is found in the spindle pole body. It localises to the chromosome. The protein localises to the telomere. In terms of biological role, involved in chromosome segregation. During meiotic prophase, connects telomeres to the spindle pole body by forming a bridge between the telomere protein rap1 and the spindle pole body protein sad1. In Schizosaccharomyces pombe (strain 972 / ATCC 24843) (Fission yeast), this protein is Telomere bouquet protein 1 (bqt1).